Reading from the N-terminus, the 76-residue chain is Beta-defensin 121 (76 aa).

The N-terminal stretch at Met1 to Ala15 is a signal peptide. Cystine bridges form between Cys23-Cys50, Cys30-Cys44, and Cys34-Cys51.

The protein belongs to the beta-defensin family. Abundant expression in the male reproductive tract only.

It localises to the secreted. Has antibacterial activity. This Homo sapiens (Human) protein is Beta-defensin 121 (DEFB121).